A 297-amino-acid polypeptide reads, in one-letter code: N-acetylmuramic acid 6-phosphate etherase (297 aa).

Residues 55 to 218 (AAAALKSGGR…STGAMVKFGK (164 aa)) form the SIS domain. The Proton donor role is filled by E83. E114 is an active-site residue.

The protein belongs to the GCKR-like family. MurNAc-6-P etherase subfamily. As to quaternary structure, homodimer.

It carries out the reaction N-acetyl-D-muramate 6-phosphate + H2O = N-acetyl-D-glucosamine 6-phosphate + (R)-lactate. Its pathway is amino-sugar metabolism; 1,6-anhydro-N-acetylmuramate degradation. It participates in amino-sugar metabolism; N-acetylmuramate degradation. It functions in the pathway cell wall biogenesis; peptidoglycan recycling. Functionally, specifically catalyzes the cleavage of the D-lactyl ether substituent of MurNAc 6-phosphate, producing GlcNAc 6-phosphate and D-lactate. Together with AnmK, is also required for the utilization of anhydro-N-acetylmuramic acid (anhMurNAc) either imported from the medium or derived from its own cell wall murein, and thus plays a role in cell wall recycling. The chain is N-acetylmuramic acid 6-phosphate etherase from Salmonella agona (strain SL483).